Consider the following 1149-residue polypeptide: cGMP-specific 3',5'-cyclic phosphodiesterase (1149 aa).

Composition is skewed to low complexity over residues 1 to 19 and 31 to 47; these read MHGTVSRSSSSSNMTDVSS and ATSSSTAATTSASASSS. Positions 1–175 are disordered; it reads MHGTVSRSSS…STTASQQDVD (175 aa). Polar residues predominate over residues 48–59; that stretch reads KPLTNGANKTAI. The segment covering 60 to 85 has biased composition (low complexity); sequence STAAGVTPGAAPGPGCAAIPASGSSG. The span at 96–108 shows a compositional bias: polar residues; the sequence is QSNNNRPAGSNRS. Residues 132 to 158 are compositionally biased toward low complexity; sequence SSSSPSQSPSQSQSQSQASIQTQTSQQ. GAF domains follow at residues 278–430 and 462–643; these read DIDV…GIGI and NLEC…GLGI. A PDEase domain is found at 673–996; that stretch reads SQDQTEKLTQ…RNWQDLAEKV (324 aa). His-749 acts as the Proton donor in catalysis. A divalent metal cation is bound by residues His-753, His-789, Asp-790, and Asp-900. Disordered regions lie at residues 1037–1066 and 1096–1149; these read QQSQHGSEDSHTPEHQRSGSRLSMKKTGAL and SHVS…CALL. 2 stretches are compositionally biased toward basic and acidic residues: residues 1042 to 1053 and 1096 to 1106; these read GSEDSHTPEHQR and SHVSEDMDDKS. Over residues 1115–1135 the composition is skewed to low complexity; sequence ASGSMGRMSASSSTSSAGGQM. Basic residues predominate over residues 1139–1149; the sequence is SKKRSKLCALL. Position 1146 is a cysteine methyl ester (Cys-1146). Cys-1146 carries the S-farnesyl cysteine lipid modification. Positions 1147–1149 are cleaved as a propeptide — removed in mature form; it reads ALL.

It belongs to the cyclic nucleotide phosphodiesterase family. In terms of assembly, interacts with PrBP. A divalent metal cation serves as cofactor.

The protein resides in the cell membrane. The catalysed reaction is 3',5'-cyclic GMP + H2O = GMP + H(+). Functionally, has a role regulating cGMP transport in Malpighian tubule principal cells. The polypeptide is cGMP-specific 3',5'-cyclic phosphodiesterase (Drosophila yakuba (Fruit fly)).